Consider the following 382-residue polypeptide: Glutamyl-tRNA reductase (382 aa).

Residues 38–41 (TCNR), S85, 90–92 (ENQ), and Q96 each bind substrate. The Nucleophile role is filled by C39. Residue 164–169 (GAGEMG) participates in NADP(+) binding.

This sequence belongs to the glutamyl-tRNA reductase family. As to quaternary structure, homodimer.

The enzyme catalyses (S)-4-amino-5-oxopentanoate + tRNA(Glu) + NADP(+) = L-glutamyl-tRNA(Glu) + NADPH + H(+). Its pathway is porphyrin-containing compound metabolism; protoporphyrin-IX biosynthesis; 5-aminolevulinate from L-glutamyl-tRNA(Glu): step 1/2. Its function is as follows. Catalyzes the NADPH-dependent reduction of glutamyl-tRNA(Glu) to glutamate 1-semialdehyde (GSA). In Methanococcus maripaludis (strain C6 / ATCC BAA-1332), this protein is Glutamyl-tRNA reductase.